We begin with the raw amino-acid sequence, 194 residues long: dCTP deaminase (194 aa).

Residues 110–115 (RSSLAR), D128, 136–138 (VLE), Y171, K178, and Q182 each bind dCTP. E138 functions as the Proton donor/acceptor in the catalytic mechanism. The disordered stretch occupies residues 174–194 (RKSSKYKDQQEAVASRISQDK).

Belongs to the dCTP deaminase family. Homotrimer.

It catalyses the reaction dCTP + H2O + H(+) = dUTP + NH4(+). It participates in pyrimidine metabolism; dUMP biosynthesis; dUMP from dCTP (dUTP route): step 1/2. Its function is as follows. Catalyzes the deamination of dCTP to dUTP. This Shewanella frigidimarina (strain NCIMB 400) protein is dCTP deaminase.